The sequence spans 318 residues: Cytochrome f (318 aa).

The first 34 residues, 1-34, serve as a signal peptide directing secretion; that stretch reads MQNRNFFEYPKNWIILLIPIFTTFNLLFTSDCYA. Positions 35, 55, 58, and 59 each coordinate heme. The helical transmembrane segment at 284–303 threads the bilayer; it reads LQGLLVFLFLVVLAQVFLVL.

It belongs to the cytochrome f family. As to quaternary structure, the 4 large subunits of the cytochrome b6-f complex are cytochrome b6, subunit IV (17 kDa polypeptide, petD), cytochrome f and the Rieske protein, while the 4 small subunits are PetG, PetL, PetM and PetN. The complex functions as a dimer. The cofactor is heme.

Its subcellular location is the plastid. It localises to the chloroplast thylakoid membrane. Functionally, component of the cytochrome b6-f complex, which mediates electron transfer between photosystem II (PSII) and photosystem I (PSI), cyclic electron flow around PSI, and state transitions. This Chaetosphaeridium globosum (Charophycean green alga) protein is Cytochrome f.